The following is a 293-amino-acid chain: Acetylglutamate kinase (293 aa).

Substrate-binding positions include 68–69 (GG), Arg90, and Asn189.

It belongs to the acetylglutamate kinase family. ArgB subfamily.

It localises to the cytoplasm. It catalyses the reaction N-acetyl-L-glutamate + ATP = N-acetyl-L-glutamyl 5-phosphate + ADP. The protein operates within amino-acid biosynthesis; L-arginine biosynthesis; N(2)-acetyl-L-ornithine from L-glutamate: step 2/4. In terms of biological role, catalyzes the ATP-dependent phosphorylation of N-acetyl-L-glutamate. The polypeptide is Acetylglutamate kinase (Caldicellulosiruptor saccharolyticus (strain ATCC 43494 / DSM 8903 / Tp8T 6331)).